A 263-amino-acid polypeptide reads, in one-letter code: MKWMCSICCAAVLLAGGAAQAEAVPNEPINWGFKRSVNHQPPDAGKQLNSLIEKYDAFYLGNTKEKTIYLTFDNGYENGYTPKVLDVLKKHRVTGTFFVTGHFVKDQPQLIKRMSDEGHIIGNHSFHHPDLTTKTADQIQDELDSVNEEVYKITGKQDNLYLRPPRGVFSEYVLKETKRLGYQTVFWSVAFVDWKINNQKGKKYAYDHMIKQAHPGAIYLLHTVSRDNAEALDDAITDLKKQGYTFKSIDDLMFEKEMRLPSL.

Residues 1–23 (MKWMCSICCAAVLLAGGAAQAEA) form the signal peptide. The NodB homology domain occupies 66–247 (KTIYLTFDNG…DLKKQGYTFK (182 aa)). Residue aspartate 73 is the Proton acceptor of the active site. The a divalent metal cation site is built by histidine 124 and histidine 128. The Proton donor role is filled by histidine 222.

Belongs to the polysaccharide deacetylase family.

Its function is as follows. Catalyzes the deacetylation of N-acetylmuramic acid (MurNAc) residues in glycan strands of peptidoglycan, leading to the formation of muramic delta-lactam residues in spore cortex, after transpeptidation of deacetylated muramic acid residues. PdaA probably carries out both deacetylation and lactam ring formation and requires the product of CwlD activity on peptidoglycan as a substrate. Is required for germination. Cannot use chitin oligomer (hexa-N-acetylchitohexaose) as a substrate. The protein is Peptidoglycan-N-acetylmuramic acid deacetylase PdaA (pdaA) of Bacillus subtilis (strain 168).